Consider the following 175-residue polypeptide: Inorganic pyrophosphatase (175 aa).

Residues Lys-30, Arg-44, and Tyr-56 each coordinate substrate. 3 residues coordinate Mg(2+): Asp-66, Asp-71, and Asp-103. Substrate is bound at residue Tyr-142.

The protein belongs to the PPase family. Homohexamer. The cofactor is Mg(2+).

It localises to the cytoplasm. It carries out the reaction diphosphate + H2O = 2 phosphate + H(+). In terms of biological role, catalyzes the hydrolysis of inorganic pyrophosphate (PPi) forming two phosphate ions. This is Inorganic pyrophosphatase from Pseudomonas aeruginosa (strain ATCC 15692 / DSM 22644 / CIP 104116 / JCM 14847 / LMG 12228 / 1C / PRS 101 / PAO1).